A 141-amino-acid polypeptide reads, in one-letter code: Extracellular globin-1 (141 aa).

The Globin domain maps to 1-141; it reads DCNTLKRFKV…YAVIAAGIKP (141 aa). A disulfide bond links C2 and C131. H94 lines the heme b pocket.

Belongs to the globin family. In terms of assembly, the giant hemoglobins of worms are formed of a monomeric subunit and a disulfide-bonded trimer. This subunit is monomeric.

The protein localises to the secreted. The protein is Extracellular globin-1 of Metaphire sieboldi (Earthworm).